The sequence spans 334 residues: MTAKLKLLDEDGIYEHLFERYSLLQKHANELKQDLGIVSRSSGDLEVSFEPQPGSHVKEHFNFEIAQSLSSLNSSRDNNNSTTGYVVWSTTPFFLQWLLYSPSGAIFGKGGTIEVEGDASHSAYELPAIFGSRTVDTDESSDVPAAPQHIIVELGAGIAGMLCVALANYVDKYVCTDQKGLLNGLKRNIKHNIDELRLRNMESSTLDFEISRRTALKTELDVLDLDWESFGLKSSNFHTLITPAGPSTVCILSMDVVYNEFLIAPYLRTLKKLLQTYEKSGNTSFAILGIQLRDQDVVEMFLSTAVVQFELKVCAIVDSEIDKTRFGLYYITTQ.

S-adenosyl-L-methionine-binding positions include Trp-88, 155–157 (GAG), Asp-177, Trp-227, and Met-254.

The protein belongs to the class I-like SAM-binding methyltransferase superfamily. RKM5 family.

Its function is as follows. S-adenosyl-L-methionine-dependent protein-lysine N-methyltransferase that methylates 60S ribosomal protein L1. In Lachancea thermotolerans (strain ATCC 56472 / CBS 6340 / NRRL Y-8284) (Yeast), this protein is Ribosomal lysine N-methyltransferase 5 (RKM5).